Reading from the N-terminus, the 539-residue chain is Prolyl 4-hydroxylase subunit alpha-2 (539 aa).

Positions 1–16 (MRAVLLVCLLAGLAHA) are cleaved as a signal peptide. A glycan (N-linked (GlcNAc...) asparagine) is linked at Asn110. A Fe2OG dioxygenase domain is found at 401–509 (TSEELQVANY…KWVSNKWIHE (109 aa)). Residues His419, Asp421, and His490 each coordinate Fe cation. Residue Lys500 participates in 2-oxoglutarate binding.

This sequence belongs to the P4HA family. In terms of assembly, heterotetramer of two alpha chains and two beta chains. Exist either as a phy-2(2)/pdi-2(2) tetramer or as a phy-1/phy-2/pdi-2(2) tetramer. Fe(2+) serves as cofactor. The cofactor is L-ascorbate.

Its subcellular location is the endoplasmic reticulum lumen. The enzyme catalyses L-prolyl-[collagen] + 2-oxoglutarate + O2 = trans-4-hydroxy-L-prolyl-[collagen] + succinate + CO2. Functionally, catalyzes the post-translational formation of 4-hydroxyproline in -Xaa-Pro-Gly- sequences in collagens and other proteins. This Caenorhabditis elegans protein is Prolyl 4-hydroxylase subunit alpha-2 (phy-2).